A 1397-amino-acid chain; its full sequence is Ankyrin repeat domain-containing protein 30A (1397 aa).

6 ANK repeats span residues 72–101, 105–134, 138–167, 171–200, 204–233, and 237–271; these read QKRT…QLDV, EHRT…DINL, YGNT…VIEV, ASLT…NANA, YKCT…DVFA, and CGVT…HQNT. A compositionally biased stretch (polar residues) spans 267–279; that stretch reads NHQNTNPEGTSAG. 4 disordered regions span residues 267–376, 453–482, 782–807, and 902–931; these read NHQN…TWPA, PTKE…EYSC, QTLR…WDSE, and TLRA…LRET. 2 stretches are compositionally biased toward basic and acidic residues: residues 290-304 and 312-326; these read RTPD…KTPD. Positions 455–467 are enriched in polar residues; sequence KESSTKASANDQR. Composition is skewed to basic and acidic residues over residues 782-800 and 913-931; these read QTLR…KDYE and SKQK…LRET. Coiled-coil stretches lie at residues 998–1188 and 1282–1327; these read VLKK…KQDK and EHAQ…FQLQ.

As to expression, mainly expressed in breast and testis. A very faint signal is detected in placenta. Also expressed in many breast cancer cells.

This Homo sapiens (Human) protein is Ankyrin repeat domain-containing protein 30A (ANKRD30A).